The chain runs to 291 residues: Undecaprenyl-diphosphatase (291 aa).

The next 8 membrane-spanning stretches (helical) occupy residues 1–21 (MFII…LTEF), 48–68 (SAFT…AWVF), 102–122 (LHVL…DDFI), 126–146 (LFSV…MIIA), 162–182 (ISYF…WPGF), 203–223 (SDFT…LSLL), 231–251 (IADI…GLIA), and 267–287 (FAIY…GFGI).

This sequence belongs to the UppP family.

The protein resides in the cell membrane. It catalyses the reaction di-trans,octa-cis-undecaprenyl diphosphate + H2O = di-trans,octa-cis-undecaprenyl phosphate + phosphate + H(+). Catalyzes the dephosphorylation of undecaprenyl diphosphate (UPP). Confers resistance to bacitracin. The polypeptide is Undecaprenyl-diphosphatase (Staphylococcus aureus (strain COL)).